A 427-amino-acid polypeptide reads, in one-letter code: BTB/POZ domain-containing protein KCTD16 (427 aa).

A BTB domain is found at 25-98; that stretch reads EVIELNVGGQ…LRDRQVVLPD (74 aa). Tyr-112 is subject to Phosphotyrosine. Phosphoserine occurs at positions 130, 137, 143, and 146.

Homopentamer; forms an open pentamer. In contrast to other BTB domain-containing proteins, does not interact with CUL3. Interacts as a tetramer with GABBR1 and GABBR2. As to expression, expressed in the brain, mainly in the hippocampus.

It localises to the presynaptic cell membrane. Its subcellular location is the postsynaptic cell membrane. Auxiliary subunit of GABA-B receptors that determine the pharmacology and kinetics of the receptor response. Increases agonist potency and markedly alter the G-protein signaling of the receptors by accelerating onset and promoting desensitization. This chain is BTB/POZ domain-containing protein KCTD16 (Kctd16), found in Mus musculus (Mouse).